We begin with the raw amino-acid sequence, 336 residues long: Histidinol-phosphate aminotransferase (336 aa).

Lys204 carries the post-translational modification N6-(pyridoxal phosphate)lysine.

Belongs to the class-II pyridoxal-phosphate-dependent aminotransferase family. Histidinol-phosphate aminotransferase subfamily. Requires pyridoxal 5'-phosphate as cofactor.

It carries out the reaction L-histidinol phosphate + 2-oxoglutarate = 3-(imidazol-4-yl)-2-oxopropyl phosphate + L-glutamate. The protein operates within amino-acid biosynthesis; L-histidine biosynthesis; L-histidine from 5-phospho-alpha-D-ribose 1-diphosphate: step 7/9. The chain is Histidinol-phosphate aminotransferase from Thermococcus kodakarensis (strain ATCC BAA-918 / JCM 12380 / KOD1) (Pyrococcus kodakaraensis (strain KOD1)).